We begin with the raw amino-acid sequence, 197 residues long: Sec-independent protein translocase protein TatB (197 aa).

A helical membrane pass occupies residues 1 to 21 (MFDIGFGELLLVMVLGLIVLG). A disordered region spans residues 93–197 (KRGYTETPSP…ASARQPSDSR (105 aa)). 2 stretches are compositionally biased toward basic and acidic residues: residues 104 to 113 (KSDDPKKSGD) and 160 to 169 (NHNDGRHATS). The segment covering 180–197 (PEQSQPSAASARQPSDSR) has biased composition (low complexity).

It belongs to the TatB family. As to quaternary structure, the Tat system comprises two distinct complexes: a TatABC complex, containing multiple copies of TatA, TatB and TatC subunits, and a separate TatA complex, containing only TatA subunits. Substrates initially bind to the TatABC complex, which probably triggers association of the separate TatA complex to form the active translocon.

It is found in the cell inner membrane. In terms of biological role, part of the twin-arginine translocation (Tat) system that transports large folded proteins containing a characteristic twin-arginine motif in their signal peptide across membranes. Together with TatC, TatB is part of a receptor directly interacting with Tat signal peptides. TatB may form an oligomeric binding site that transiently accommodates folded Tat precursor proteins before their translocation. The polypeptide is Sec-independent protein translocase protein TatB (Pectobacterium atrosepticum (strain SCRI 1043 / ATCC BAA-672) (Erwinia carotovora subsp. atroseptica)).